A 240-amino-acid polypeptide reads, in one-letter code: MNILLIGYGAMNQRVARLAEDKGHEIVGVIDRTSKASTPYSQYQHISECKEADVAIDFSNPELLFPLLEEQFNLPLVIATTGEKETLIQKLETLSQRTPVFFSANMSYGVHALTKILETAVPLLQDFDIELTEAHHNKKVDAPSGTLVKLYDVIKELRDNVSPVYDRHEKTEKRTHDEIGIHAVRGGTIVGEHDILFAGTDETITISHKAQSKDIFANGAIGAAEKLIHKNPGFYTFNNL.

Residues 79–81 (ATT) and 103–106 (SANM) each bind NAD(+). The active-site Proton donor/acceptor is the H135. H136 is a binding site for (S)-2,3,4,5-tetrahydrodipicolinate. K139 functions as the Proton donor in the catalytic mechanism. A (S)-2,3,4,5-tetrahydrodipicolinate-binding site is contributed by 145 to 146 (GT).

The protein belongs to the DapB family.

The protein localises to the cytoplasm. The catalysed reaction is (S)-2,3,4,5-tetrahydrodipicolinate + NAD(+) + H2O = (2S,4S)-4-hydroxy-2,3,4,5-tetrahydrodipicolinate + NADH + H(+). The enzyme catalyses (S)-2,3,4,5-tetrahydrodipicolinate + NADP(+) + H2O = (2S,4S)-4-hydroxy-2,3,4,5-tetrahydrodipicolinate + NADPH + H(+). It participates in amino-acid biosynthesis; L-lysine biosynthesis via DAP pathway; (S)-tetrahydrodipicolinate from L-aspartate: step 4/4. In terms of biological role, catalyzes the conversion of 4-hydroxy-tetrahydrodipicolinate (HTPA) to tetrahydrodipicolinate. This chain is 4-hydroxy-tetrahydrodipicolinate reductase, found in Staphylococcus epidermidis (strain ATCC 12228 / FDA PCI 1200).